A 305-amino-acid polypeptide reads, in one-letter code: Methionyl-tRNA formyltransferase (305 aa).

109-112 (SLLP) provides a ligand contact to (6S)-5,6,7,8-tetrahydrofolate.

The protein belongs to the Fmt family.

It carries out the reaction L-methionyl-tRNA(fMet) + (6R)-10-formyltetrahydrofolate = N-formyl-L-methionyl-tRNA(fMet) + (6S)-5,6,7,8-tetrahydrofolate + H(+). Functionally, attaches a formyl group to the free amino group of methionyl-tRNA(fMet). The formyl group appears to play a dual role in the initiator identity of N-formylmethionyl-tRNA by promoting its recognition by IF2 and preventing the misappropriation of this tRNA by the elongation apparatus. The polypeptide is Methionyl-tRNA formyltransferase (Roseobacter denitrificans (strain ATCC 33942 / OCh 114) (Erythrobacter sp. (strain OCh 114))).